The chain runs to 37 residues: Large ribosomal subunit protein bL36 (37 aa).

This sequence belongs to the bacterial ribosomal protein bL36 family.

In Oleidesulfovibrio alaskensis (strain ATCC BAA-1058 / DSM 17464 / G20) (Desulfovibrio alaskensis), this protein is Large ribosomal subunit protein bL36 (rpmJ).